A 428-amino-acid polypeptide reads, in one-letter code: Enolase (428 aa).

Q163 is a (2R)-2-phosphoglycerate binding site. E205 (proton donor) is an active-site residue. Mg(2+) contacts are provided by D242, E285, and D312. Residues K337, R366, S367, and K388 each coordinate (2R)-2-phosphoglycerate. The active-site Proton acceptor is the K337.

The protein belongs to the enolase family. Requires Mg(2+) as cofactor.

The protein localises to the cytoplasm. It localises to the secreted. The protein resides in the cell surface. It carries out the reaction (2R)-2-phosphoglycerate = phosphoenolpyruvate + H2O. It functions in the pathway carbohydrate degradation; glycolysis; pyruvate from D-glyceraldehyde 3-phosphate: step 4/5. Its function is as follows. Catalyzes the reversible conversion of 2-phosphoglycerate (2-PG) into phosphoenolpyruvate (PEP). It is essential for the degradation of carbohydrates via glycolysis. This is Enolase from Neisseria gonorrhoeae (strain ATCC 700825 / FA 1090).